A 219-amino-acid chain; its full sequence is Uracil-DNA glycosylase (219 aa).

The active-site Proton acceptor is the D59.

This sequence belongs to the uracil-DNA glycosylase (UDG) superfamily. UNG family.

It localises to the cytoplasm. The catalysed reaction is Hydrolyzes single-stranded DNA or mismatched double-stranded DNA and polynucleotides, releasing free uracil.. Functionally, excises uracil residues from the DNA which can arise as a result of misincorporation of dUMP residues by DNA polymerase or due to deamination of cytosine. The chain is Uracil-DNA glycosylase from Macrococcus caseolyticus (strain JCSC5402) (Macrococcoides caseolyticum).